A 359-amino-acid polypeptide reads, in one-letter code: Protein RecA (359 aa).

An ATP-binding site is contributed by 69-76 (GPESSGKT). Residues 337–359 (SANSVAKASEEDEEEEVDLEPEE) are disordered. A compositionally biased stretch (acidic residues) spans 346 to 359 (EEDEEEEVDLEPEE).

Belongs to the RecA family.

It localises to the cytoplasm. Can catalyze the hydrolysis of ATP in the presence of single-stranded DNA, the ATP-dependent uptake of single-stranded DNA by duplex DNA, and the ATP-dependent hybridization of homologous single-stranded DNAs. It interacts with LexA causing its activation and leading to its autocatalytic cleavage. This Nostoc punctiforme (strain ATCC 29133 / PCC 73102) protein is Protein RecA.